A 181-amino-acid polypeptide reads, in one-letter code: Caltractin ICL1d (181 aa).

The interval 1 to 29 (MARRGQQPPPQQAPPAQKNQTGKFNPAEF) is disordered. 4 EF-hand domains span residues 37–72 (EEVLEIKEAFDLFDTDGTQSIDPKELKAAMTSLGFE), 73–108 (AKNQTIYQMISDLDTDGSGQIDFAEFLKLMTARISE), 110–145 (DSKADIQKVFNLFDSERAGVITLKDLRKVAKELGET), and 146–181 (MDDSELQEMIDRADSDGDAQVTFEDFYNIMTKKTFA). Residues D50, D52, T54, S56, E61, D86, D88, S90, Q92, and E97 each coordinate Ca(2+).

The protein belongs to the centrin family. Monomer.

Its subcellular location is the cytoplasm. It localises to the cytoskeleton. Plays a fundamental role in microtubule organizing center structure and function. Component of the infraciliary lattice (ICL) and the ciliary basal bodies. The sequence is that of Caltractin ICL1d (Icl1d) from Paramecium tetraurelia.